Reading from the N-terminus, the 1585-residue chain is uncharacterized protein (1585 aa).

Residues 12–59 (DKISRKLRMIQGNAERLKRAANGPLIFEAEDRTERVMRQIDRSANRLT) adopt a coiled-coil conformation. 2 disordered regions span residues 586-627 (PKRT…SLPR) and 645-692 (IRRR…NPTR). Over residues 618-627 (TATGPTSLPR) the composition is skewed to polar residues. Residues 645–655 (IRRRRGKRVLG) are compositionally biased toward basic residues. Over residues 661–672 (NRMNPSDSSIAV) the composition is skewed to polar residues. 2 positions are modified to phosphoserine: Ser-970 and Ser-972.

It to B.subtilis XkdO.

This is an uncharacterized protein from Bacillus subtilis (strain 168).